A 212-amino-acid polypeptide reads, in one-letter code: MRDPVETYMNLVPMVVEQTNRGERAYDIFSRLLKERIIFVTGPVEDGMSTLIVAQLLFLEAENPKKEISMYINSPGGVVTSGLAIYDTMQFIRPPVSTLCTGQAASMGSLLLAAGHKDMRFSLPNARIMVHQPSGGFQGQATDIMLHAQEILNLKKRLNEIYVHHTGQTYKAIEDALERDKFLTAEMAREFGIVDKVIEKRPEDPAPAPKAA.

The Nucleophile role is filled by Ser106. Residue His131 is part of the active site.

The protein belongs to the peptidase S14 family. As to quaternary structure, fourteen ClpP subunits assemble into 2 heptameric rings which stack back to back to give a disk-like structure with a central cavity, resembling the structure of eukaryotic proteasomes.

It is found in the cytoplasm. The catalysed reaction is Hydrolysis of proteins to small peptides in the presence of ATP and magnesium. alpha-casein is the usual test substrate. In the absence of ATP, only oligopeptides shorter than five residues are hydrolyzed (such as succinyl-Leu-Tyr-|-NHMec, and Leu-Tyr-Leu-|-Tyr-Trp, in which cleavage of the -Tyr-|-Leu- and -Tyr-|-Trp bonds also occurs).. Its function is as follows. Cleaves peptides in various proteins in a process that requires ATP hydrolysis. Has a chymotrypsin-like activity. Plays a major role in the degradation of misfolded proteins. The polypeptide is ATP-dependent Clp protease proteolytic subunit (Rhodopseudomonas palustris (strain ATCC BAA-98 / CGA009)).